The sequence spans 1249 residues: Clustered mitochondria protein homolog (1249 aa).

Residues 1–32 are disordered; it reads MAQTNGELEHSKETPEQLTNGNHPEETQEEDN. The region spanning 318–562 is the Clu domain; the sequence is DITRSQENYL…RVTPLDVMWQ (245 aa). Over residues 605 to 628 the composition is skewed to basic and acidic residues; it reads KAEADAAKAESSEATESKEQASEE. Disordered stretches follow at residues 605–636 and 868–903; these read KAEADAAKAESSEATESKEQASEEKSEEDQER and KAPATNGANGVAQEEGKNKKKKKGGDSSSPARAAKE. TPR repeat units lie at residues 974–1007, 1016–1049, and 1058–1091; these read AKLYHQLSMLYYQTDEKEAAVELARKAVIVTERT, ILSYLNLSLFEHASGNTKTALAYIKHAMDLWKII, and ITTMNNAAVMLQHLKQYSDSRKWFEASLEVCESL. Residues 1174-1249 are disordered; it reads NMNPRSLGTK…KLRGSKKSSA (76 aa). Over residues 1176-1190 the composition is skewed to polar residues; that stretch reads NPRSLGTKIQPQVGQ.

This sequence belongs to the CLU family. As to quaternary structure, may associate with the eukaryotic translation initiation factor 3 (eIF-3) complex.

Its subcellular location is the cytoplasm. Functionally, mRNA-binding protein involved in proper cytoplasmic distribution of mitochondria. This chain is Clustered mitochondria protein homolog, found in Aspergillus niger (strain ATCC MYA-4892 / CBS 513.88 / FGSC A1513).